The sequence spans 264 residues: MLLTIDVRNTSIELGLFAGSGTHARLERHWRIHTNPLLTADELAMQLRGLIGGPLEQVIGVAALSTVPPVLRELRTMLARYWSHVPHVVVEPGVRTGIPLLVDNPKEIGADRIVNALAAHQRFGGPAIVVDFGTATTVDLVSAKGEFLGGVIAPGVAISGEALIEKAGLRRVELARPRSVVGKNTVEAIQSGAVFGFAGLVDGLIDRIRDEFDAFAGDDVTVVATGISAPLIVPESETIDQHEPHLTLTGLLRVYERNQQRRRT.

An ATP-binding site is contributed by 6–13 (DVRNTSIE). Substrate is bound at residue 109–112 (GADR). Residue Asp-111 is the Proton acceptor of the active site. Residue Asp-131 coordinates K(+). Residue Thr-134 participates in ATP binding. A substrate-binding site is contributed by Thr-185.

It belongs to the type III pantothenate kinase family. Homodimer. The cofactor is NH4(+). It depends on K(+) as a cofactor.

It localises to the cytoplasm. The catalysed reaction is (R)-pantothenate + ATP = (R)-4'-phosphopantothenate + ADP + H(+). Its pathway is cofactor biosynthesis; coenzyme A biosynthesis; CoA from (R)-pantothenate: step 1/5. Catalyzes the phosphorylation of pantothenate (Pan), the first step in CoA biosynthesis. The protein is Type III pantothenate kinase of Nocardia farcinica (strain IFM 10152).